The primary structure comprises 329 residues: DNA-directed RNA polymerase subunit alpha (329 aa).

Positions 1–235 are alpha N-terminal domain (alpha-NTD); sequence MQGSVTEFLK…EQLEAFVDLR (235 aa). An alpha C-terminal domain (alpha-CTD) region spans residues 249-329; sequence FDPILLRPVD…NWPPASIADE (81 aa).

Belongs to the RNA polymerase alpha chain family. In terms of assembly, homodimer. The RNAP catalytic core consists of 2 alpha, 1 beta, 1 beta' and 1 omega subunit. When a sigma factor is associated with the core the holoenzyme is formed, which can initiate transcription.

The catalysed reaction is RNA(n) + a ribonucleoside 5'-triphosphate = RNA(n+1) + diphosphate. In terms of biological role, DNA-dependent RNA polymerase catalyzes the transcription of DNA into RNA using the four ribonucleoside triphosphates as substrates. The sequence is that of DNA-directed RNA polymerase subunit alpha from Sodalis glossinidius (strain morsitans).